Here is a 416-residue protein sequence, read N- to C-terminus: UDP-N-acetylglucosamine 1-carboxyvinyltransferase (416 aa).

Residue 22–23 participates in phosphoenolpyruvate binding; the sequence is KN. Arg91 lines the UDP-N-acetyl-alpha-D-glucosamine pocket. The active-site Proton donor is Cys115. Cys115 is modified (2-(S-cysteinyl)pyruvic acid O-phosphothioketal). Residues 120–124, Asp305, and Ile327 each bind UDP-N-acetyl-alpha-D-glucosamine; that span reads RPIDL.

It belongs to the EPSP synthase family. MurA subfamily.

The protein resides in the cytoplasm. It catalyses the reaction phosphoenolpyruvate + UDP-N-acetyl-alpha-D-glucosamine = UDP-N-acetyl-3-O-(1-carboxyvinyl)-alpha-D-glucosamine + phosphate. It functions in the pathway cell wall biogenesis; peptidoglycan biosynthesis. Cell wall formation. Adds enolpyruvyl to UDP-N-acetylglucosamine. The protein is UDP-N-acetylglucosamine 1-carboxyvinyltransferase of Buchnera aphidicola subsp. Acyrthosiphon pisum (strain Tuc7).